The primary structure comprises 337 residues: 2-oxoglutarate-dependent dioxygenase 19 (337 aa).

Residues 1 to 25 form a disordered region; that stretch reads MVAPSRLPSHEEQSAAAAADGSATP. The Fe2OG dioxygenase domain occupies 179–283; it reads NLESCFQILV…RMSFVSLIGP (105 aa). Positions 208, 210, and 264 each coordinate Fe cation. Arg274 provides a ligand contact to 2-oxoglutarate.

The protein belongs to the iron/ascorbate-dependent oxidoreductase family. It depends on Fe(2+) as a cofactor. L-ascorbate is required as a cofactor. In terms of tissue distribution, expressed in shoots.

Its subcellular location is the cytoplasm. It carries out the reaction melatonin + 2-oxoglutarate + O2 = 2-hydroxymelatonin + succinate + CO2. Functionally, involved in melatonin degradation. Catalyzes the hydroxylation of melatonin to produce 2-hydroxymelatonin. In Oryza sativa subsp. japonica (Rice), this protein is 2-oxoglutarate-dependent dioxygenase 19.